The chain runs to 1409 residues: CRISPR-associated endonuclease Cas9 (1409 aa).

The For RuvC-like nuclease domain role is filled by aspartate 31. Mg(2+) is bound by residues aspartate 31, glutamate 784, and glutamate 788. One can recognise an HNH Cas9-type domain in the interval 792–949; the sequence is TNQGKSNSQQ…DKAGFIQRQL (158 aa). Catalysis depends on histidine 868, which acts as the Proton acceptor for HNH nuclease domain. Histidine 1011 contacts Mg(2+). The segment covering 1121 to 1130 has biased composition (basic and acidic residues); it reads EQNHGLDRGK. The interval 1121-1151 is disordered; it reads EQNHGLDRGKPKGLFNANLSSKPKPNSNENL. Residues 1137–1150 are compositionally biased toward polar residues; it reads ANLSSKPKPNSNEN.

Belongs to the CRISPR-associated protein Cas9 family. Subtype II-A subfamily. As to quaternary structure, monomer. Binds crRNA and tracrRNA. The cofactor is Mg(2+).

Its activity is regulated as follows. Only has nuclease activity when bound to both gRNAs (crRNA plus tracrRNA). In terms of biological role, CRISPR (clustered regularly interspaced short palindromic repeat) is an adaptive immune system that provides protection against mobile genetic elements (viruses, transposable elements and conjugative plasmids). CRISPR clusters contain spacers, sequences complementary to antecedent mobile elements, and target invading nucleic acids. CRISPR clusters are transcribed and processed into CRISPR RNA (crRNA). In type II CRISPR systems correct processing of pre-crRNA requires a trans-encoded small RNA (tracrRNA), endogenous ribonuclease 3 (rnc) and Cas9. The tracrRNA serves as a guide for ribonuclease 3-aided processing of pre-crRNA. Cas9/crRNA/tracrRNA endonucleolytically cleaves linear or circular dsDNA target complementary to the spacer yielding blunt ends; Cas9 is inactive in the absence of the 2 guide RNAs (gRNA). Cas9 recognizes a 3'-G-rich protospacer adjacent motif (PAM, TGGTG in this organism) in the CRISPR repeat sequences to help distinguish self versus nonself, as targets within the bacterial CRISPR locus do not have PAMs. PAM recognition is also required for catalytic activity. When the CRISPR3/cas system consisting of cas9-cas1-cas2-csn2-CRISPR3 or just cas9-CRISPR3 is expressed in E.coli it prevents plasmids homologous to spacers 1 or 2 from transforming. This chain is CRISPR-associated endonuclease Cas9, found in Streptococcus thermophilus.